A 247-amino-acid polypeptide reads, in one-letter code: Carboxy-S-adenosyl-L-methionine synthase (247 aa).

Residues Tyr-39, 64-66 (GCS), 89-90 (DN), 117-118 (DI), Asn-132, and Arg-199 contribute to the S-adenosyl-L-methionine site.

Belongs to the class I-like SAM-binding methyltransferase superfamily. Cx-SAM synthase family. Homodimer.

It catalyses the reaction prephenate + S-adenosyl-L-methionine = carboxy-S-adenosyl-L-methionine + 3-phenylpyruvate + H2O. In terms of biological role, catalyzes the conversion of S-adenosyl-L-methionine (SAM) to carboxy-S-adenosyl-L-methionine (Cx-SAM). The sequence is that of Carboxy-S-adenosyl-L-methionine synthase from Escherichia coli O127:H6 (strain E2348/69 / EPEC).